A 350-amino-acid polypeptide reads, in one-letter code: Alcohol dehydrogenase (350 aa).

C46 lines the Zn(2+) pocket. The NAD(+) site is built by H47, T48, and H51. Zn(2+)-binding residues include H69, C100, C103, C106, C114, and C156. The NAD(+) site is built by G183, G184, L185, and D204. Residue T205 is modified to Phosphothreonine. K209 and F224 together coordinate NAD(+). At T250 the chain carries Phosphothreonine. Residues V271, M273, S296, V298, and R343 each coordinate NAD(+).

Belongs to the zinc-containing alcohol dehydrogenase family. As to quaternary structure, homotetramer. Zn(2+) is required as a cofactor.

The protein resides in the cytoplasm. It catalyses the reaction a primary alcohol + NAD(+) = an aldehyde + NADH + H(+). It carries out the reaction a secondary alcohol + NAD(+) = a ketone + NADH + H(+). The catalysed reaction is ethanol + NAD(+) = acetaldehyde + NADH + H(+). Functionally, reduces acetaldehyde to ethanol during the fermentation of glucose. This chain is Alcohol dehydrogenase (adh1), found in Schizosaccharomyces pombe (strain 972 / ATCC 24843) (Fission yeast).